The chain runs to 447 residues: Sensor protein VanSB (447 aa).

The next 2 helical transmembrane spans lie at 10 to 30 (VFSY…TLFA) and 137 to 155 (GIVM…AYIF). The region spanning 157 to 208 (RQMTTPIKALADSANKMANLKEVPPPLERKDELGALAHDMHSMYIRLKETIA) is the HAMP domain. The Histidine kinase domain maps to 230–445 (AASHELKTPI…LFWLDLPPTS (216 aa)). Phosphohistidine; by autocatalysis is present on His233.

The protein resides in the cell membrane. It carries out the reaction ATP + protein L-histidine = ADP + protein N-phospho-L-histidine.. In terms of biological role, member of the two-component regulatory system VanSB/VanRB. Activates the transcription of vanSB, vanYB and vanW in response to vancomycin which results in vancomycin resistance. VanSB may activate VanRB by phosphorylation. May also act as a phospho-VanRB phosphatase. The sequence is that of Sensor protein VanSB (vanSB) from Enterococcus faecalis (strain ATCC 700802 / V583).